We begin with the raw amino-acid sequence, 302 residues long: Sulfate adenylyltransferase subunit 2 (302 aa).

The interval 280–302 (RQGRLIDSDQSASMEQKKRQGYF) is disordered.

It belongs to the PAPS reductase family. CysD subfamily. As to quaternary structure, heterodimer composed of CysD, the smaller subunit, and CysN.

The enzyme catalyses sulfate + ATP + H(+) = adenosine 5'-phosphosulfate + diphosphate. It functions in the pathway sulfur metabolism; hydrogen sulfide biosynthesis; sulfite from sulfate: step 1/3. In terms of biological role, with CysN forms the ATP sulfurylase (ATPS) that catalyzes the adenylation of sulfate producing adenosine 5'-phosphosulfate (APS) and diphosphate, the first enzymatic step in sulfur assimilation pathway. APS synthesis involves the formation of a high-energy phosphoric-sulfuric acid anhydride bond driven by GTP hydrolysis by CysN coupled to ATP hydrolysis by CysD. This chain is Sulfate adenylyltransferase subunit 2, found in Shewanella putrefaciens (strain CN-32 / ATCC BAA-453).